The sequence spans 109 residues: Protein reprimo (109 aa).

N-linked (GlcNAc...) asparagine glycosylation is found at N7 and N18. A helical membrane pass occupies residues 56–76; sequence VVQIAVMCVLSLTVVFGIFFL. S98 is subject to Phosphoserine.

Belongs to the reprimo family.

It is found in the cytoplasm. The protein localises to the membrane. Its function is as follows. May be involved in the regulation of p53-dependent G2 arrest of the cell cycle. Seems to induce cell cycle arrest by inhibiting CDK1 activity and nuclear translocation of the CDC2 cyclin B1 complex. This Homo sapiens (Human) protein is Protein reprimo (RPRM).